The following is a 590-amino-acid chain: MLAVVGAAALVLVAGAPWVLPSAAGGENLKPPENIDVYIIDDNYTLKWSSHGESMGSVTFSAEYRTKDEAKWLKVPECQHTTTTKCEFSLLDTNVYIKTQFRVRAEEGNSTSSWNEVDPFIPFYTAHMSPPEVRLEAEDKAILVHISPPGQDGNMWALEKPSFSYTIRIWQKSSSDKKTINSTYYVEKIPELLPETTYCLEVKAIHPSLKKHSNYSTVQCISTTVANKMPVPGNLQVDAQGKSYVLKWDYIASADVLFRAQWLPGYSKSSSGSRSDKWKPIPTCANVQTTHCVFSQDTVYTGTFFLHVQASEGNHTSFWSEEKFIDSQKHILPPPPVITVTAMSDTLLVYVNCQDSTCDGLNYEIIFWENTSNTKISMEKDGPEFTLKNLQPLTVYCVQARVLFRALLNKTSNFSEKLCEKTRPGSFSTIWIITGLGVVFFSVMVLYALRSVWKYLCHVCFPPLKPPRSIDEFFSEPPSKNLVLLTAEEHTERCFIIENTDTVAVEVKHAPEEDLRKYSSQTSQDSGNYSNEEEESVGTESGQAVLSKAPCGGPCSVPSPPGTLEDGTCFLGNEKYLQSPALRTEPALLC.

Residues 1-26 (MLAVVGAAALVLVAGAPWVLPSAAGG) form the signal peptide. Topologically, residues 27 to 429 (ENLKPPENID…EKTRPGSFST (403 aa)) are extracellular. 4 Fibronectin type-III domains span residues 31 to 125 (PPEN…PFYT), 127 to 226 (HMSP…TTVA), 230 to 327 (PVPG…FIDS), and 332 to 425 (LPPP…TRPG). A glycan (N-linked (GlcNAc...) asparagine) is linked at asparagine 43. Cysteine 78 and cysteine 86 form a disulfide bridge. N-linked (GlcNAc...) asparagine glycans are attached at residues asparagine 109, asparagine 181, and asparagine 214. 2 disulfide bridges follow: cysteine 199–cysteine 220 and cysteine 284–cysteine 292. Asparagine 314, asparagine 370, asparagine 409, and asparagine 413 each carry an N-linked (GlcNAc...) asparagine glycan. Cysteine 397 and cysteine 419 form a disulfide bridge. The helical transmembrane segment at 430–449 (IWIITGLGVVFFSVMVLYAL) threads the bilayer. The Cytoplasmic portion of the chain corresponds to 450–590 (RSVWKYLCHV…ALRTEPALLC (141 aa)). The tract at residues 483-492 (VLLTAEEHTE) is important for interaction with TYK2. The segment at 514–545 (DLRKYSSQTSQDSGNYSNEEEESVGTESGQAV) is disordered. Lysine 517 participates in a covalent cross-link: Glycyl lysine isopeptide (Lys-Gly) (interchain with G-Cter in ubiquitin). Residues 518 to 530 (YSSQTSQDSGNYS) show a composition bias toward polar residues. Phosphoserine is present on serine 526.

Belongs to the type II cytokine receptor family. As to quaternary structure, heterodimer with IFNAR2; forming the receptor for type I interferon. Interacts with TYK2. Interacts with STAT1 and STAT2. Interacts (serine-phosphorylated form) with FBXW11, the substrate recognition component of a SCF (SKP1-CUL1-F-box protein) E3 ubiquitin-protein ligase complex. 3Interacts with SHMT2; this promotes interaction with ABRAXAS2 and the BRISC complex. Interacts with TRIM10; this interaction prevents association between IFNAR1 and TYK2. Ubiquitinated. This leads to its internalization and lysosomal degradation. The 'Lys-63'-linked ubiquitin chains are cleaved off by the BRISC complex; this prevents receptor internalization and degradation. Probable ubiquitination sites have been identified in human, but are poorly conserved across species. In terms of processing, phosphorylated on serine residues in response to interferon binding; this promotes interaction with FBXW11 and ubiquitination.

The protein localises to the cell membrane. Its subcellular location is the late endosome. It localises to the lysosome. Together with IFNAR2, forms the heterodimeric receptor for type I interferons (including interferons alpha, beta, epsilon, omega and kappa). Type I interferon binding activates the JAK-STAT signaling cascade, and triggers tyrosine phosphorylation of a number of proteins including JAKs, TYK2, STAT proteins and the IFNR alpha- and beta-subunits themselves. STAT proteins are then phosphorylated by the JAKs, promoting their translocation into the nucleus to regulate expression of interferon-regulated genes. Can also act independently of IFNAR2: form an active IFNB1 receptor by itself and activate a signaling cascade that does not involve activation of the JAK-STAT pathway. The protein is Interferon alpha/beta receptor 1 (Ifnar1) of Mus musculus (Mouse).